We begin with the raw amino-acid sequence, 175 residues long: Coagulogen (175 aa).

8 disulfide bridges follow: Cys-8-Cys-167, Cys-10-Cys-95, Cys-60-Cys-161, Cys-65-Cys-121, Cys-75-Cys-168, Cys-88-Cys-140, Cys-127-Cys-170, and Cys-134-Cys-172.

It belongs to the coagulin family. Coagulogen is cleaved after Arg-18 and Arg-46 by a clotting enzyme contained in the hemocyte and activated by a bacterial endotoxin (lipopolysaccharide). This cleavage releases the peptide C and leaves 2 chains of coagulin, A and B, linked by two disulfide bonds. Coagulin molecules interlink to form a gel. In terms of tissue distribution, hemolymph.

Its subcellular location is the secreted. Functionally, coagulogen is a gel-forming protein of hemolymph; it hinders the spread of invaders by immobilizing them. This chain is Coagulogen, found in Tachypleus gigas (Southeast Asian horseshoe crab).